The primary structure comprises 95 residues: Small ribosomal subunit protein bS6 (95 aa).

Belongs to the bacterial ribosomal protein bS6 family.

Functionally, binds together with bS18 to 16S ribosomal RNA. This Desulfitobacterium hafniense (strain DSM 10664 / DCB-2) protein is Small ribosomal subunit protein bS6.